The chain runs to 266 residues: Glucosamine-6-phosphate deaminase (266 aa).

The active-site Proton acceptor; for enolization step is Asp72. Asp141 functions as the For ring-opening step in the catalytic mechanism. His143 (proton acceptor; for ring-opening step) is an active-site residue. The active-site For ring-opening step is Glu148.

The protein belongs to the glucosamine/galactosamine-6-phosphate isomerase family. NagB subfamily. In terms of assembly, homohexamer; trimer of disulfide-linked dimers.

The enzyme catalyses alpha-D-glucosamine 6-phosphate + H2O = beta-D-fructose 6-phosphate + NH4(+). The protein operates within amino-sugar metabolism; N-acetylneuraminate degradation; D-fructose 6-phosphate from N-acetylneuraminate: step 5/5. Allosterically activated by N-acetylglucosamine 6-phosphate (GlcNAc6P). Its function is as follows. Catalyzes the reversible isomerization-deamination of glucosamine 6-phosphate (GlcN6P) to form fructose 6-phosphate (Fru6P) and ammonium ion. This Shigella boydii serotype 18 (strain CDC 3083-94 / BS512) protein is Glucosamine-6-phosphate deaminase.